We begin with the raw amino-acid sequence, 324 residues long: Inhibitor of growth protein 1 homolog (324 aa).

Residues 120–237 are disordered; the sequence is AEEEKKKKKS…SSRKQKSMAA (118 aa). Positions 140–169 are enriched in low complexity; the sequence is SSTTSSSSSSSSSSLSLSSSTNNTSSLNSS. Over residues 170–186 the composition is skewed to gly residues; the sequence is SGGGGGGSGGGGGGGGH. Residues 201-229 are compositionally biased toward low complexity; the sequence is SLTSSSSSGNINGMSSSSSSSSSSSSLSS. The segment at 271–320 adopts a PHD-type zinc-finger fold; it reads PTYCFCNRVSFGEMVGCENPDCKIEWFHFECVGLTSTPKGKWYCPDCTRI. Zn(2+)-binding residues include Cys-274, Cys-276, Cys-287, Cys-292, His-298, Cys-301, Cys-314, and Cys-317.

It belongs to the ING family. In terms of assembly, interacts with H3K4me3 and to a lesser extent with H3K4me2.

Its subcellular location is the nucleus. Its function is as follows. Involved in regulation of the growth and differentiation transition (GDT) process, probably by regulating gene expression via histone modification. This is Inhibitor of growth protein 1 homolog from Dictyostelium discoideum (Social amoeba).